A 259-amino-acid polypeptide reads, in one-letter code: MQVDLLSSAQSAHALHLFHQHSPLVHCMTNDVVQTFTANTLLALGASPAMVIETEEASQFAAIASALLINVGTLTQPRAQAMSAAVEQAQTPWTLDPVAVGALDYRRRFCVELLSHKPTAIRGNASEIMALAGVANGGRGVDTTDAAANAIPAAQTLARETGAIVVVTGEVDYVTDGHRIVGIHGGDPLMTKVVGTGCALSAVVAACCALPGDTLENVASACHWMKQAGERAVARSEGPGSFVPHFLDALWQLAQEVQA.

Methionine 50 serves as a coordination point for substrate. Residues arginine 122 and threonine 168 each contribute to the ATP site. Glycine 195 provides a ligand contact to substrate.

It belongs to the Thz kinase family. Requires Mg(2+) as cofactor.

It catalyses the reaction 5-(2-hydroxyethyl)-4-methylthiazole + ATP = 4-methyl-5-(2-phosphooxyethyl)-thiazole + ADP + H(+). Its pathway is cofactor biosynthesis; thiamine diphosphate biosynthesis; 4-methyl-5-(2-phosphoethyl)-thiazole from 5-(2-hydroxyethyl)-4-methylthiazole: step 1/1. Its function is as follows. Catalyzes the phosphorylation of the hydroxyl group of 4-methyl-5-beta-hydroxyethylthiazole (THZ). The sequence is that of Hydroxyethylthiazole kinase from Escherichia coli O127:H6 (strain E2348/69 / EPEC).